Reading from the N-terminus, the 461-residue chain is Putative cytochrome P450 132 (461 aa).

Heme is bound at residue cysteine 409.

It belongs to the cytochrome P450 family. Heme is required as a cofactor.

The chain is Putative cytochrome P450 132 (cyp132) from Mycobacterium tuberculosis (strain ATCC 25618 / H37Rv).